A 938-amino-acid polypeptide reads, in one-letter code: Probable outer membrane protein pmp15 (938 aa).

The N-terminal stretch at 1-17 (MRFFCFGMLLPFTFVLA) is a signal peptide. One can recognise an Autotransporter domain in the interval 659–938 (DEEKGHAASL…YLNVASRMRF (280 aa)).

It belongs to the PMP outer membrane protein family.

Its subcellular location is the secreted. It is found in the cell wall. The protein resides in the cell outer membrane. The sequence is that of Probable outer membrane protein pmp15 (pmp15) from Chlamydia pneumoniae (Chlamydophila pneumoniae).